The following is a 227-amino-acid chain: MGDNYSTYLLDIEGTVCPISFVKETLSPYFTKKVPQLVQQDTRDSPVSNILSQFHIDDKEQLQAHILELVAKDVKDPILKQLQGYIWAQGYESGQIKAPVYADAIDFIKRKKRVFIYSSGSVKAQKLLFGYVQDPNAPAHDSLDLNSYIDGYFDINTSGKKTETQSYANILRDIGAKASEVLFLSDNPLELDAAAGVGIATGLASRPGNAPVPDGQKYQVYKDFETL.

Mg(2+) is bound by residues D11 and E13. Substrate contacts are provided by residues 118-119 (SS) and K161. D186 provides a ligand contact to Mg(2+).

Belongs to the HAD-like hydrolase superfamily. MasA/MtnC family. Monomer. Requires Mg(2+) as cofactor.

Its subcellular location is the cytoplasm. It localises to the nucleus. The enzyme catalyses 5-methylsulfanyl-2,3-dioxopentyl phosphate + H2O = 1,2-dihydroxy-5-(methylsulfanyl)pent-1-en-3-one + phosphate. The protein operates within amino-acid biosynthesis; L-methionine biosynthesis via salvage pathway; L-methionine from S-methyl-5-thio-alpha-D-ribose 1-phosphate: step 3/6. It functions in the pathway amino-acid biosynthesis; L-methionine biosynthesis via salvage pathway; L-methionine from S-methyl-5-thio-alpha-D-ribose 1-phosphate: step 4/6. Bifunctional enzyme that catalyzes the enolization of 2,3-diketo-5-methylthiopentyl-1-phosphate (DK-MTP-1-P) into the intermediate 2-hydroxy-3-keto-5-methylthiopentenyl-1-phosphate (HK-MTPenyl-1-P), which is then dephosphorylated to form the acireductone 1,2-dihydroxy-3-keto-5-methylthiopentene (DHK-MTPene). The sequence is that of Enolase-phosphatase E1 from Saccharomyces cerevisiae (strain JAY291) (Baker's yeast).